The primary structure comprises 152 residues: Protein FYV5 (152 aa).

Transmembrane regions (helical) follow at residues 26–46, 56–76, 82–102, 106–126, and 127–147; these read IISI…RICS, LISS…SCVL, VGII…VLFL, LIDL…TPFF, and FMLH…YLII.

The protein resides in the cell membrane. It is found in the secreted. The protein localises to the cell wall. In terms of biological role, involved in maintaining an adequate ionic strength homeostasis of the cellular aqueous environment, necessary for normal growth rate. Required for survival upon exposure to K1 killer toxin and hence plays a role in cell wall glucan synthesis. Required for dithiothreitol (DTT) resistance. Involved in cell cycle progression. This chain is Protein FYV5 (FYV5), found in Saccharomyces cerevisiae (strain ATCC 204508 / S288c) (Baker's yeast).